The chain runs to 508 residues: MIGFSAFILRNYYAAIGWNEDNLYSSLTRTSSALLDFQLPQSLILQLANSPTPIFFTSYALDALPQLNGSISYITTSMPLDEIGSGRATAFKNVIERFRVFPPPKRPQPKDEVWLGGKRIEGRDYLLYSRLHLPSLHLSGLATTRLTPTLQAHLAFLSQPAHPTSTRPTPPQTPPSHTRQPSEPSTPAPSPTPGNVFISLQHDTGRYCGEYTYSVQDGMVGLRTLYNFGWHGDEESEVDKKERREREGKRIDEEEMMEGGLKGRFSAGGEVYFSAKQRSFGISTGLRFTTVPPTLPLPLNAPVPSPPTTLTLLYNPLIGFLSSAYSAQVSPTVALATRFGVNVYSYESDLSVGGEWWIGRRRGKRGLTTDAEPQLDAESRDPVVTGIEENRELTEKMAQRASLRQVTLRDEIGEDVHAEKELYSPIPVMTDVNAGELAQQISPRLQPQQDLDDERDGVLKARLSGNWQFALLYEARIRNCLVSAGVLADLTGRQHPIRSIGLEVQYFS.

The tract at residues 160–195 (PAHPTSTRPTPPQTPPSHTRQPSEPSTPAPSPTPGN) is disordered.

Belongs to the MDM10 family. Component of the ER-mitochondria encounter structure (ERMES) or MDM complex, composed of MMM1, MDM10, MDM12 and MDM34. Associates with the mitochondrial outer membrane sorting assembly machinery SAM(core) complex.

The protein localises to the mitochondrion outer membrane. Its function is as follows. Component of the ERMES/MDM complex, which serves as a molecular tether to connect the endoplasmic reticulum and mitochondria. Components of this complex are involved in the control of mitochondrial shape and protein biogenesis and may function in phospholipid exchange. MDM10 is involved in the late assembly steps of the general translocase of the mitochondrial outer membrane (TOM complex). Functions in the TOM40-specific route of the assembly of outer membrane beta-barrel proteins, including the association of TOM40 with the receptor TOM22 and small TOM proteins. Can associate with the SAM(core) complex as well as the MDM12-MMM1 complex, both involved in late steps of the major beta-barrel assembly pathway, that is responsible for biogenesis of all outer membrane beta-barrel proteins. May act as a switch that shuttles between both complexes and channels precursor proteins into the TOM40-specific pathway. Plays a role in mitochondrial morphology and in the inheritance of mitochondria. In Cryptococcus neoformans var. neoformans serotype D (strain JEC21 / ATCC MYA-565) (Filobasidiella neoformans), this protein is Mitochondrial distribution and morphology protein 10.